The chain runs to 328 residues: Naphthalene 1,2-dioxygenase system ferredoxin--NAD(P)(+), reductase component (328 aa).

Positions 1-89 (MELLIQPNNR…NCAIEVPEAD (89 aa)) constitute a 2Fe-2S ferredoxin-type domain. [2Fe-2S] cluster is bound by residues Cys-35, Cys-40, Cys-43, and Cys-73. An FAD-binding FR-type domain is found at 96–193 (ARIIKGTVVA…SGPLGTAYLR (98 aa)).

Belongs to the bacterial ring-hydroxylating dioxygenase ferredoxin reductase component family. In terms of assembly, the naphthalene dioxygenase (NDO) multicomponent enzyme system is composed of an electron transfer component and a dioxygenase component (iron sulfur protein (ISP)). The electron transfer component is composed of a ferredoxin reductase (NdoR) and a ferredoxin (NdoA), and the dioxygenase component is formed of a heterohexamer (trimer of heterodimers) of three large alpha subunits (NdoB) and three small beta subunits (NdoC). The cofactor is [2Fe-2S] cluster. FAD serves as cofactor.

The catalysed reaction is 2 reduced [2Fe-2S]-[ferredoxin] + NAD(+) + H(+) = 2 oxidized [2Fe-2S]-[ferredoxin] + NADH. It catalyses the reaction 2 reduced [2Fe-2S]-[ferredoxin] + NADP(+) + H(+) = 2 oxidized [2Fe-2S]-[ferredoxin] + NADPH. It functions in the pathway aromatic compound metabolism; naphthalene degradation. Its activity is regulated as follows. Strongly inhibited by p-chloromercuribenzoate. Also inhibited by N-ethylmaleimide and o-phenanthroline. Functionally, component of the naphthalene dioxygenase (NDO) multicomponent enzyme system which catalyzes the incorporation of both atoms of molecular oxygen into naphthalene to form cis-(1R,2S)-dihydroxy-1,2-dihydronaphthalene. Ferredoxin reductase catalyzes the transfer of electrons from NADH to ferredoxin (NdoA). NADPH is also effective but yields only 39% of the activity obtained with NADH. Also able to catalyze the cis-dihydroxylation of biphenyl and phenanthrene. This chain is Naphthalene 1,2-dioxygenase system ferredoxin--NAD(P)(+), reductase component (ndoR), found in Pseudomonas putida (Arthrobacter siderocapsulatus).